Reading from the N-terminus, the 241-residue chain is Platelet-derived growth factor subunit B (241 aa).

The N-terminal stretch at 1–20 (MNRCWALFLSLCCYLRLVSA) is a signal peptide. A propeptide spans 21–81 (EGDPIPEELY…ELESLARGRR (61 aa)) (removed in mature form). Asn-63 carries an N-linked (GlcNAc...) asparagine glycan. Disulfide bonds link Cys-97/Cys-141, Cys-130/Cys-178, and Cys-134/Cys-180. Residues 191-241 (RSPGGSQEQRAKTPQTRVTIRTVRVRRPPKGKHRKFKHTHDKTALKETLGA) constitute a propeptide, removed in mature form. Residues 216–230 (RRPPKGKHRKFKHTH) are compositionally biased toward basic residues. Residues 216–241 (RRPPKGKHRKFKHTHDKTALKETLGA) form a disordered region.

Belongs to the PDGF/VEGF growth factor family. In terms of assembly, antiparallel homodimer; disulfide-linked. Antiparallel heterodimer with PDGFA; disulfide-linked. The PDGFB homodimer interacts with PDGFRA and PDGFRB homodimers, and with heterodimers formed by PDGFRA and PDGFRB. The heterodimer composed of PDGFA and PDGFB interacts with PDGFRB homodimers, and with heterodimers formed by PDGFRA and PDGFRB. Interacts with XLKD1. Interacts with LRP1. Interacts with SORL1 (via the N-terminal ectodomain). Interacts with CD82; this interaction inhibits PDGFB-mediated signaling pathway. As to expression, expressed at high levels in the heart, brain (sustantia nigra), placenta and fetal kidney. Expressed at moderate levels in the brain (hippocampus), skeletal muscle, kidney and lung.

The protein localises to the secreted. Its function is as follows. Growth factor that plays an essential role in the regulation of embryonic development, cell proliferation, cell migration, survival and chemotaxis. Potent mitogen for cells of mesenchymal origin. Required for normal proliferation and recruitment of pericytes and vascular smooth muscle cells in the central nervous system, skin, lung, heart and placenta. Required for normal blood vessel development, and for normal development of kidney glomeruli. Plays an important role in wound healing. Signaling is modulated by the formation of heterodimers with PDGFA. The protein is Platelet-derived growth factor subunit B (PDGFB) of Homo sapiens (Human).